A 732-amino-acid chain; its full sequence is Protein kinase YpkA (732 aa).

Residues 136–408 (VAETDKFAEG…SNEARLHEFL (273 aa)) form the Protein kinase domain. Residues 142 to 150 (FAEGESHIS) and K163 each bind ATP. D270 (proton acceptor) is an active-site residue.

It belongs to the protein kinase superfamily. Ser/Thr protein kinase family.

It is found in the secreted. It carries out the reaction L-seryl-[protein] + ATP = O-phospho-L-seryl-[protein] + ADP + H(+). The catalysed reaction is L-threonyl-[protein] + ATP = O-phospho-L-threonyl-[protein] + ADP + H(+). Functionally, acts as a virulence determinant. The sequence is that of Protein kinase YpkA (ypkA) from Yersinia pseudotuberculosis serotype I (strain IP32953).